Consider the following 223-residue polypeptide: ATP phosphoribosyltransferase (223 aa).

It belongs to the ATP phosphoribosyltransferase family. Short subfamily. As to quaternary structure, heteromultimer composed of HisG and HisZ subunits.

The protein resides in the cytoplasm. It catalyses the reaction 1-(5-phospho-beta-D-ribosyl)-ATP + diphosphate = 5-phospho-alpha-D-ribose 1-diphosphate + ATP. The protein operates within amino-acid biosynthesis; L-histidine biosynthesis; L-histidine from 5-phospho-alpha-D-ribose 1-diphosphate: step 1/9. Its function is as follows. Catalyzes the condensation of ATP and 5-phosphoribose 1-diphosphate to form N'-(5'-phosphoribosyl)-ATP (PR-ATP). Has a crucial role in the pathway because the rate of histidine biosynthesis seems to be controlled primarily by regulation of HisG enzymatic activity. This chain is ATP phosphoribosyltransferase, found in Bordetella pertussis (strain Tohama I / ATCC BAA-589 / NCTC 13251).